Consider the following 437-residue polypeptide: Xylose isomerase (437 aa).

Residues H102 and D105 contribute to the active site. Residues E233, E269, H272, D297, D308, D310, and D340 each contribute to the Mg(2+) site.

Belongs to the xylose isomerase family. Homotetramer. It depends on Mg(2+) as a cofactor.

The protein localises to the cytoplasm. It carries out the reaction alpha-D-xylose = alpha-D-xylulofuranose. This Novosphingobium aromaticivorans (strain ATCC 700278 / DSM 12444 / CCUG 56034 / CIP 105152 / NBRC 16084 / F199) protein is Xylose isomerase.